A 1170-amino-acid chain; its full sequence is PAN2-PAN3 deadenylation complex catalytic subunit PAN2 (1170 aa).

2 WD repeats span residues 104 to 144 (ENMK…IIKQ) and 280 to 319 (NISS…HFTD). The segment at 319-458 (DMAIPIELPE…DPNEIESLKP (140 aa)) is linker. Residues 399–459 (RRNQVEDTRN…PNEIESLKPE (61 aa)) are disordered. The span at 443-452 (VDQEPEDPNE) shows a compositional bias: acidic residues. Residues 459–846 (EAPPLYRNLE…MPAVLLFQIK (388 aa)) enclose the USP domain. The Exonuclease domain maps to 894–1067 (VALDTEFVSL…EDARTALKLY (174 aa)). 4 residues coordinate a divalent metal cation: Asp897, Glu899, Asp1006, and Asp1059. Residues 1094–1170 (NFKPPRREDR…PSKASSPLPK (77 aa)) are disordered. Residues 1098-1108 (PRREDREKELQ) are compositionally biased toward basic and acidic residues. Residues 1109 to 1119 (RQSTPPNSTAP) show a composition bias toward polar residues.

Belongs to the peptidase C19 family. PAN2 subfamily. Forms a heterotrimer with an asymmetric homodimer of the regulatory subunit PAN3 to form the poly(A)-nuclease (PAN) deadenylation complex. The cofactor is a divalent metal cation.

It is found in the cytoplasm. It carries out the reaction Exonucleolytic cleavage of poly(A) to 5'-AMP.. With respect to regulation, positively regulated by the regulatory subunit PAN3. Its function is as follows. Catalytic subunit of the poly(A)-nuclease (PAN) deadenylation complex, one of two cytoplasmic mRNA deadenylases involved in mRNA turnover. PAN specifically shortens poly(A) tails of RNA and the activity is stimulated by poly(A)-binding protein PAB1. PAN deadenylation is followed by rapid degradation of the shortened mRNA tails by the CCR4-NOT complex. Deadenylated mRNAs are then degraded by two alternative mechanisms, namely exosome-mediated 3'-5' exonucleolytic degradation, or deadenylation-dependent mRNA decaping and subsequent 5'-3' exonucleolytic degradation by XRN1. May also be involved in post-transcriptional maturation of mRNA poly(A) tails. The protein is PAN2-PAN3 deadenylation complex catalytic subunit PAN2 of Chaetomium thermophilum (strain DSM 1495 / CBS 144.50 / IMI 039719) (Thermochaetoides thermophila).